The following is a 147-amino-acid chain: Myoglobin (147 aa).

A Globin domain is found at A2 to K141. H60 lines the nitrite pocket. Residue H60 participates in O2 binding. H89 serves as a coordination point for heme b.

The protein belongs to the globin family. As to quaternary structure, monomeric.

Its subcellular location is the cytoplasm. It is found in the sarcoplasm. It catalyses the reaction Fe(III)-heme b-[protein] + nitric oxide + H2O = Fe(II)-heme b-[protein] + nitrite + 2 H(+). It carries out the reaction H2O2 + AH2 = A + 2 H2O. Monomeric heme protein which primary function is to store oxygen and facilitate its diffusion within muscle tissues. Reversibly binds oxygen through a pentacoordinated heme iron and enables its timely and efficient release as needed during periods of heightened demand. Depending on the oxidative conditions of tissues and cells, and in addition to its ability to bind oxygen, it also has a nitrite reductase activity whereby it regulates the production of bioactive nitric oxide. Under stress conditions, like hypoxia and anoxia, it also protects cells against reactive oxygen species thanks to its pseudoperoxidase activity. In Gobionotothen gibberifrons (Humped rockcod), this protein is Myoglobin (mb).